Here is a 449-residue protein sequence, read N- to C-terminus: Biotin carboxylase (449 aa).

Positions 1–445 (MLDKIVIANR…NIHYLEKKLG (445 aa)) constitute a Biotin carboxylation domain. Residues Lys-116, Lys-159, 165-166 (GG), 201-204 (EKYL), His-209, and His-236 contribute to the ATP site. Residues 120 to 317 (IAAMKKAGVP…LIKEQLRIAA (198 aa)) enclose the ATP-grasp domain. Lys-238 contacts hydrogencarbonate. ATP-binding residues include Glu-276 and Glu-288. The Mg(2+) site is built by Glu-276, Glu-288, and Asn-290. Residues Glu-276, Glu-288, and Asn-290 each contribute to the Mn(2+) site. Hydrogencarbonate contacts are provided by Arg-292, Val-295, and Arg-338. Arg-292 is an active-site residue. Arg-338 contributes to the biotin binding site.

In terms of assembly, acetyl-CoA carboxylase is a heterohexamer of biotin carboxyl carrier protein, biotin carboxylase and the two subunits of carboxyl transferase in a 2:2 complex. The cofactor is Mg(2+). Mn(2+) serves as cofactor.

It catalyses the reaction N(6)-biotinyl-L-lysyl-[protein] + hydrogencarbonate + ATP = N(6)-carboxybiotinyl-L-lysyl-[protein] + ADP + phosphate + H(+). Its pathway is lipid metabolism; malonyl-CoA biosynthesis; malonyl-CoA from acetyl-CoA: step 1/1. In terms of biological role, this protein is a component of the acetyl coenzyme A carboxylase complex; first, biotin carboxylase catalyzes the carboxylation of the carrier protein and then the transcarboxylase transfers the carboxyl group to form malonyl-CoA. This chain is Biotin carboxylase (accC), found in Escherichia coli (strain K12).